The chain runs to 384 residues: Heparin lyase I (384 aa).

The first 21 residues, 1-21 (MKKQILYLIVLQQLFLCSAYA), serve as a signal peptide directing secretion. At Gln-22 the chain carries Blocked amino end (Gln). Residue Ser-39 is glycosylated (O-linked (Man...) serine).

As to quaternary structure, monomer. The N-terminus is blocked.

It is found in the periplasm. It carries out the reaction Eliminative cleavage of polysaccharides containing (1-&gt;4)-linked D-glucuronate or L-iduronate residues and (1-&gt;4)-alpha-linked 2-sulfoamino-2-deoxy-6-sulfo-D-glucose residues to give oligosaccharides with terminal 4-deoxy-alpha-D-gluc-4-enuronosyl groups at their non-reducing ends.. Functionally, degrades heparin and heparan sulfate. Also implicated in the release of heparin-bound growth factors from the extracellular matrix. This is Heparin lyase I from Pedobacter heparinus (Flavobacterium heparinum).